Here is a 292-residue protein sequence, read N- to C-terminus: uncharacterized protein (292 aa).

The HTH lysR-type domain occupies 1-58 (MEWEQLEYFQTLARMQHVTKAAKSLSITQPALSRSIARLENHLGVPLFDRQGRSISLN). Positions 18-37 (VTKAAKSLSITQPALSRSIA) form a DNA-binding region, H-T-H motif.

Belongs to the LysR transcriptional regulatory family.

This is an uncharacterized protein from Bacillus subtilis (strain 168).